The following is a 91-amino-acid chain: Small ribosomal subunit protein uS19 (91 aa).

This sequence belongs to the universal ribosomal protein uS19 family.

In terms of biological role, protein S19 forms a complex with S13 that binds strongly to the 16S ribosomal RNA. The protein is Small ribosomal subunit protein uS19 of Afipia carboxidovorans (strain ATCC 49405 / DSM 1227 / KCTC 32145 / OM5) (Oligotropha carboxidovorans).